The following is a 165-amino-acid chain: Protein NKG7 (165 aa).

The next 4 helical transmembrane spans lie at 9–29 (LLGGSLGLMFCLIALSTDFWF), 61–81 (FSIMAVLWALVSVSFLVLSCF), 92–112 (LVSTTAAFAAAISMVVAMAVY), and 133–153 (FYLGWVSAILLLCTGALSLGA).

Belongs to the PMP-22/EMP/MP20 family. Expressed in activated T-cells, in kidney, liver, lung and pancreas. Not expressed in brain, heart, or skeletal muscle. Expressed at high levels in TCR gamma delta-expressing CTL clones, and in some TCR alpha beta-expressing CTL clones (both CD4+ and CD8+), but is not expressed in other TCR alpha beta-expressing CTL clones and in cell lines representing B-cells, monocytes, and myeloid cells.

The protein localises to the cell membrane. It is found in the cytolytic granule membrane. Its function is as follows. Regulates cytotoxic granule exocytosis in effector lymphocytes, thus acting as a critical mediator of inflammation in a broad range of infectious and non-infectious diseases. Essential for cytotoxic degranulation of natural killer (NK) cells and CD8(+) T-cells and for the activation of CD4(+) T-cells following infection. Plays a critical role in CD8(+) T-cell and NK cell-mediated cytolysis of target cells and contributes to the cytolytic activity via the perforin/granzyme pathway by enhancing exocytosis of LAMP1-carrying lytic granules. Contributes to NK cell-mediated control of cancer metastasis. The sequence is that of Protein NKG7 (NKG7) from Homo sapiens (Human).